Consider the following 484-residue polypeptide: Zinc metalloproteinase-disintegrin BlatH1 (484 aa).

The N-terminal stretch at 1-20 (MIQVLLVTICLAALPYQGSS) is a signal peptide. Residues 21 to 190 (IILESGNVND…KKASQSNLTP (170 aa)) constitute a propeptide that is removed on maturation. Glu-191 carries the post-translational modification Pyrrolidone carboxylic acid (Glu). The Peptidase M12B domain maps to 199–395 (KYVELVIVAD…QNSQCILNEP (197 aa)). Ca(2+) is bound at residue Glu-202. N-linked (GlcNAc...) asparagine glycosylation occurs at Asn-259. Asp-286 is a Ca(2+) binding site. The N-linked (GlcNAc...) asparagine glycan is linked to Asn-297. Intrachain disulfides connect Cys-310/Cys-390, Cys-350/Cys-374, and Cys-352/Cys-357. His-335 is a Zn(2+) binding site. Glu-336 is a catalytic residue. Residues His-339 and His-345 each coordinate Zn(2+). Residue Asn-373 is glycosylated (N-linked (GlcNAc...) asparagine). Ca(2+) contacts are provided by Cys-390, Asn-393, Val-405, Asn-408, Glu-412, Glu-415, and Asp-418. The Disintegrin domain maps to 403–484 (PPVCGNEILE…GQSADCPSNG (82 aa)). 7 disulfides stabilise this stretch: Cys-406–Cys-425, Cys-417–Cys-435, Cys-419–Cys-430, Cys-429–Cys-452, Cys-443–Cys-449, Cys-448–Cys-473, and Cys-461–Cys-480. The TDN-tripeptide signature appears at 465-467 (TDN).

It belongs to the venom metalloproteinase (M12B) family. P-II subfamily. P-IIc sub-subfamily. In terms of assembly, homodimer. Zn(2+) serves as cofactor. Post-translationally, the N-terminus is blocked. As to expression, expressed by the venom gland.

Its subcellular location is the secreted. Platelet aggregation in inhibited by the metalloproteinase inhibitors EDTA and Batimastat. The hemorrhagic activity is not inhibited by the plasma proteinase inhibitor alpha2-macroglobulin, although the SVMP is able to cleave this plasma inhibitor, generating a 90 kDa product. Functionally, snake venom zinc metalloprotease-disintegrin that hydrolyzes azocasein, gelatin and fibrinogen (Aalpha and Bbeta chains and partially gamma-chain), and exerts a potent local and systemic hemorrhagic activity in mice. It inhibits ADP- and collagen-induced human platelet aggregation (IC(50) = 0.3 uM and 0.7 uM for ADP and collagen, respectively). This inhibition is dependent of protease activity, and probably occurs through the degradation of an unknown platelet receptor. In Bothriechis lateralis (Side-striped palm pitviper), this protein is Zinc metalloproteinase-disintegrin BlatH1.